A 172-amino-acid polypeptide reads, in one-letter code: RNA pyrophosphohydrolase (172 aa).

Positions 8-153 constitute a Nudix hydrolase domain; that stretch reads QHRPNVGVVL…KRGVYEAVVA (146 aa). A Nudix box motif is present at residues 43–64; that stretch reads GGVDEGEDLEVAARRELAEETG.

Belongs to the Nudix hydrolase family. RppH subfamily. Requires a divalent metal cation as cofactor.

In terms of biological role, accelerates the degradation of transcripts by removing pyrophosphate from the 5'-end of triphosphorylated RNA, leading to a more labile monophosphorylated state that can stimulate subsequent ribonuclease cleavage. The sequence is that of RNA pyrophosphohydrolase from Caulobacter vibrioides (strain ATCC 19089 / CIP 103742 / CB 15) (Caulobacter crescentus).